The chain runs to 571 residues: Hsp70-Hsp90 organizing protein 2 (571 aa).

3 TPR repeats span residues 2 to 35 (ADEAKAKGNAAFSSGDFNSAVNHFTDAINLTPTN), 37 to 69 (VLFSNRSAAHASLNHYDEALSDAKKTVELKPDW), and 70 to 103 (GKGYSRLGAAHLGLNQFDEAVEAYSKGLEIDPSN). Residues 117–137 (ASRSRASAPNPFGDAFQGPEM) form a disordered region. Residues 134-173 (GPEMWSKLTADPSTRGLLKQPDFVNMMKEIQRNPSNLNLY) enclose the STI1 1 domain. Phosphoserine is present on S168. Residues 198 to 207 (DDMEIGEEEM) show a composition bias toward acidic residues. Residues 198 to 245 (DDMEIGEEEMAVPSRKEPEVEKKRKPEPEPEPEPEFGEEKQKKLKAQK) are disordered. Composition is skewed to basic and acidic residues over residues 211-225 (SRKEPEVEKKRKPEP) and 234-245 (GEEKQKKLKAQK). Residues 240 to 257 (KLKAQKEKELGNAAYKKK) carry the Bipartite nuclear localization signal motif. TPR repeat units follow at residues 243 to 276 (AQKEKELGNAAYKKKDFETAIQHYSTAMEIDDED), 278 to 310 (SYITNRAAVHLEMGKYDECIKDCDKAVERGREL), 322 to 355 (TRKGTALGKMAKVSKDYEPVIQTYQKALTEHRNP), 382 to 415 (GDEEREKGNDFFKEQKYPDAVRHYTEAIKRNPKD), 417 to 449 (RAYSNRAACYTKLGAMPEGLKDAEKCIELDPTF), and 450 to 483 (LKGYSRKGAVQFFMKEYDNAMETYQKGLEHDPNN). The STI1 2 domain occupies 520–559 (DPEIQNILTDPVMRQVLSDLQENPAAAQKHMQNPMIMNKI).

As to quaternary structure, co-chaperone that forms a complex with HSP70 and HSP90 and preproteins (e.g. chloroplast preproteins). Post-translationally, phosphorylated. Acetylated.

The protein resides in the cytoplasm. It is found in the nucleus. Its function is as follows. Mediates the association of the molecular chaperones HSP70 and HSP90. Mediates nuclear encoded chloroplast preproteins binding to HSP90 prior to chloroplastic sorting. This Arabidopsis thaliana (Mouse-ear cress) protein is Hsp70-Hsp90 organizing protein 2 (HOP2).